Here is a 92-residue protein sequence, read N- to C-terminus: Small ribosomal subunit protein uS19 (92 aa).

Belongs to the universal ribosomal protein uS19 family.

Functionally, protein S19 forms a complex with S13 that binds strongly to the 16S ribosomal RNA. This Treponema denticola (strain ATCC 35405 / DSM 14222 / CIP 103919 / JCM 8153 / KCTC 15104) protein is Small ribosomal subunit protein uS19.